Consider the following 388-residue polypeptide: N-acetylneuraminate epimerase (388 aa).

An N-terminal signal peptide occupies residues 1–26 (MFSLIGAKRQAIGIAALAWSTGAVMA). 7 Kelch repeats span residues 48–92 (MAYV…AAAG), 94–147 (KIFA…VGLA), 149–186 (GRIA…KLVD), 187–232 (SYMG…ATMG), 236–285 (FLLV…VAGA), 307–356 (ANAA…DAPG), and 358–387 (LLVV…LSVE).

Belongs to the NanM family. As to quaternary structure, homodimer.

It localises to the periplasm. It catalyses the reaction N-acetyl-alpha-neuraminate = N-acetyl-beta-neuraminate. In terms of biological role, converts alpha-N-acetylneuranimic acid (Neu5Ac) to the beta-anomer, accelerating the equilibrium between the alpha- and beta-anomers. Probably facilitates sialidase-negative bacteria to compete successfully for limited amounts of extracellular Neu5Ac, which is likely taken up in the beta-anomer. In addition, the rapid removal of sialic acid from solution might be advantageous to the bacterium to damp down host responses. The protein is N-acetylneuraminate epimerase of Brucella suis (strain ATCC 23445 / NCTC 10510).